Consider the following 48-residue polypeptide: uncharacterized protein (48 aa).

This is an uncharacterized protein from Acidianus convivator (ABV).